We begin with the raw amino-acid sequence, 222 residues long: Superoxide dismutase [Mn], mitochondrial (222 aa).

Residues 1–24 constitute a mitochondrion transit peptide; the sequence is MLCRAACSTSRKLVPALGSLGSRQ. Histidine 50 lines the Mn(2+) pocket. Tyrosine 58 bears the 3'-nitrotyrosine mark. An N6-acetyllysine; alternate mark is found at lysine 68 and lysine 75. 2 positions are modified to N6-succinyllysine; alternate: lysine 68 and lysine 75. Residue histidine 98 participates in Mn(2+) binding. Position 114 is an N6-acetyllysine (lysine 114). Lysine 122 and lysine 130 each carry N6-acetyllysine; alternate. 2 positions are modified to N6-succinyllysine; alternate: lysine 122 and lysine 130. 2 residues coordinate Mn(2+): aspartate 183 and histidine 187. Lysine 202 is modified (N6-acetyllysine).

It belongs to the iron/manganese superoxide dismutase family. In terms of assembly, homotetramer. It depends on Mn(2+) as a cofactor. Nitrated under oxidative stress. Nitration coupled with oxidation inhibits the catalytic activity. Post-translationally, acetylation at Lys-122 decreases enzymatic activity. Deacetylated by SIRT3 upon exposure to ionizing radiations or after long fasting. In terms of processing, polyubiquitinated; leading to proteasomal degradation. Deubiquitinated by USP36 which increases protein stability.

The protein resides in the mitochondrion matrix. The catalysed reaction is 2 superoxide + 2 H(+) = H2O2 + O2. Destroys superoxide anion radicals which are normally produced within the cells and which are toxic to biological systems. This is Superoxide dismutase [Mn], mitochondrial (SOD2) from Equus caballus (Horse).